A 98-amino-acid chain; its full sequence is Cystatin-B (98 aa).

M1 is subject to N-acetylmethionine. A Secondary area of contact motif is present at residues 46–50 (QLVAG).

This sequence belongs to the cystatin family. Able to form dimers stabilized by noncovalent forces.

The protein resides in the cytoplasm. Its function is as follows. This is an intracellular thiol proteinase inhibitor. The protein is Cystatin-B (CSTB) of Ovis aries (Sheep).